A 1365-amino-acid polypeptide reads, in one-letter code: Homeotic protein spalt-major (1365 aa).

Disordered regions lie at residues 47–194 (SADK…EVTL), 270–298 (QAKQ…EEEE), and 322–363 (LINA…NTHK). Composition is skewed to low complexity over residues 63–76 (SPLT…SPSR) and 87–99 (EQST…PEQS). Residues 103–117 (HQLENDIKSEAKSEI) show a composition bias toward basic and acidic residues. A compositionally biased stretch (low complexity) spans 146-157 (PSSPVAEASAEE). Residues 159-181 (ATERTPEKEKEKDVEVDVEKPDE) are compositionally biased toward basic and acidic residues. Positions 275-298 (EDTEEDADQEQDQEQETDTYEEEE) are enriched in acidic residues. Positions 346 to 363 (HDHESQPNRRPSLDNTHK) are enriched in basic and acidic residues. C2H2-type zinc fingers lie at residues 451–473 (HRCR…IRSH) and 479–501 (FKCN…FQRH). Disordered regions lie at residues 508–554 (VPMN…ASFP) and 586–716 (ELPT…TPGQ). Over residues 530–539 (MSPTDSSPNH) the composition is skewed to polar residues. Residues 540-554 (SPAPPPLGSAPASFP) are compositionally biased toward pro residues. 2 stretches are compositionally biased toward basic and acidic residues: residues 603–622 (PQVK…HEQE) and 638–662 (VRIK…EPRR). Ser-739 and Ser-744 each carry phosphoserine. The interval 740–772 (PEHHSPVRSPAGGALPPGVPPPPHHHPHHMARS) is disordered. 3 C2H2-type zinc fingers span residues 824–846 (NQCV…YRTH), 852–874 (FKCR…MAVH), and 884–906 (HQCP…IRLH). Disordered stretches follow at residues 948–1012 (ALPG…RSGD), 1030–1129 (VVNT…ILTS), and 1146–1241 (HHLQ…GARP). Residues 976-991 (DMDDNMDCGEDYDDDV) show a composition bias toward acidic residues. Positions 1040–1054 (SSASSHGHSVGSTSA) are enriched in low complexity. Positions 1055–1079 (PTSPSVHASSQVIKRSSSPARSEAS) are enriched in polar residues. Residues Ser-1076 and Ser-1079 each carry the phosphoserine modification. 3 stretches are compositionally biased toward low complexity: residues 1085–1100 (LTPR…SRSP), 1114–1123 (RSPSGSSHAS), and 1146–1168 (HHLQ…AAAA). Positions 1181–1191 (QHQEQLRREAA) are enriched in basic and acidic residues. Over residues 1192–1218 (EAQQKAAAAAAAAAAAAAAQRQTPPQA) the composition is skewed to low complexity. C2H2-type zinc fingers lie at residues 1289–1311 (TTCG…YRSH) and 1317–1339 (FKCS…MLTH).

It belongs to the sal C2H2-type zinc-finger protein family.

It is found in the nucleus. Functionally, required for the establishment of the posterior-most head and the anterior-most tail segments of the embryo. Probably function as a transcriptional regulator. Could repress the transcription of the tsh gene. This Drosophila melanogaster (Fruit fly) protein is Homeotic protein spalt-major (salm).